The sequence spans 504 residues: Protein nucleotidyltransferase YdiU (504 aa).

ATP-binding residues include Gly99, Gly101, Arg102, Lys122, Asp134, Gly135, Arg185, and Arg192. Residue Asp261 is the Proton acceptor of the active site. Asn262 and Asp271 together coordinate Mg(2+). Asp271 lines the ATP pocket.

It belongs to the SELO family. It depends on Mg(2+) as a cofactor. Requires Mn(2+) as cofactor.

The enzyme catalyses L-seryl-[protein] + ATP = 3-O-(5'-adenylyl)-L-seryl-[protein] + diphosphate. The catalysed reaction is L-threonyl-[protein] + ATP = 3-O-(5'-adenylyl)-L-threonyl-[protein] + diphosphate. It catalyses the reaction L-tyrosyl-[protein] + ATP = O-(5'-adenylyl)-L-tyrosyl-[protein] + diphosphate. It carries out the reaction L-histidyl-[protein] + UTP = N(tele)-(5'-uridylyl)-L-histidyl-[protein] + diphosphate. The enzyme catalyses L-seryl-[protein] + UTP = O-(5'-uridylyl)-L-seryl-[protein] + diphosphate. The catalysed reaction is L-tyrosyl-[protein] + UTP = O-(5'-uridylyl)-L-tyrosyl-[protein] + diphosphate. Nucleotidyltransferase involved in the post-translational modification of proteins. It can catalyze the addition of adenosine monophosphate (AMP) or uridine monophosphate (UMP) to a protein, resulting in modifications known as AMPylation and UMPylation. The protein is Protein nucleotidyltransferase YdiU of Methylococcus capsulatus (strain ATCC 33009 / NCIMB 11132 / Bath).